Consider the following 100-residue polypeptide: Urease subunit gamma (100 aa).

The protein belongs to the urease gamma subunit family. As to quaternary structure, heterotrimer of UreA (gamma), UreB (beta) and UreC (alpha) subunits. Three heterotrimers associate to form the active enzyme.

The protein resides in the cytoplasm. The enzyme catalyses urea + 2 H2O + H(+) = hydrogencarbonate + 2 NH4(+). It participates in nitrogen metabolism; urea degradation; CO(2) and NH(3) from urea (urease route): step 1/1. The polypeptide is Urease subunit gamma (Proteus hauseri).